A 254-amino-acid polypeptide reads, in one-letter code: Activity-regulated cytoskeleton associated protein 1 (254 aa).

It belongs to the ARC/ARG3.1 family. As to quaternary structure, homooligomer; homooligomerizes into virion-like capsids. In terms of tissue distribution, expressed in a specific population of brain neurons, named E347, that are necessary and sufficient for proper body fat storage.

The protein localises to the extracellular vesicle membrane. It is found in the synapse. Functionally, master regulator of synaptic plasticity that self-assembles into virion-like capsids that encapsulate RNAs and mediate intercellular RNA transfer from motorneurons to muscles. Arc1 protein is released from motorneurons in extracellular vesicles that mediate the transfer of Arc1 mRNA into muscle cells, where Arc1 mRNA can undergo activity-dependent translation. Intercellular transfer od Arc1 mRNA is required for synaptic plasticity at the neuromuscular junction. May play a role in energy balance: required for regulation of body fat by a specific population of brain neurons, named E347, that are necessary and sufficient for proper body fat storage. The chain is Activity-regulated cytoskeleton associated protein 1 from Drosophila melanogaster (Fruit fly).